The sequence spans 543 residues: 2,3-bisphosphoglycerate-independent phosphoglycerate mutase (543 aa).

The Mn(2+) site is built by D20 and S73. S73 serves as the catalytic Phosphoserine intermediate. Substrate-binding positions include H134, 166–167, R198, R204, 278–281, and K360; these read RD and RGDR. The Mn(2+) site is built by D428, H432, D469, H470, and H488.

This sequence belongs to the BPG-independent phosphoglycerate mutase family. In terms of assembly, monomer. It depends on Mn(2+) as a cofactor.

It catalyses the reaction (2R)-2-phosphoglycerate = (2R)-3-phosphoglycerate. It functions in the pathway carbohydrate degradation; glycolysis; pyruvate from D-glyceraldehyde 3-phosphate: step 3/5. Catalyzes the interconversion of 2-phosphoglycerate and 3-phosphoglycerate. The protein is 2,3-bisphosphoglycerate-independent phosphoglycerate mutase of Rhodopirellula baltica (strain DSM 10527 / NCIMB 13988 / SH1).